A 239-amino-acid chain; its full sequence is Protein GrpE (239 aa).

Disordered regions lie at residues 1–53 and 210–239; these read MIEE…EDLK and GPGQ…SEEN. Composition is skewed to basic and acidic residues over residues 34-53 and 219-230; these read NEDK…EDLK and SEEKDKVDKDID.

Belongs to the GrpE family. In terms of assembly, homodimer.

The protein localises to the cytoplasm. Participates actively in the response to hyperosmotic and heat shock by preventing the aggregation of stress-denatured proteins, in association with DnaK and GrpE. It is the nucleotide exchange factor for DnaK and may function as a thermosensor. Unfolded proteins bind initially to DnaJ; upon interaction with the DnaJ-bound protein, DnaK hydrolyzes its bound ATP, resulting in the formation of a stable complex. GrpE releases ADP from DnaK; ATP binding to DnaK triggers the release of the substrate protein, thus completing the reaction cycle. Several rounds of ATP-dependent interactions between DnaJ, DnaK and GrpE are required for fully efficient folding. The chain is Protein GrpE from Prochlorococcus marinus (strain MIT 9515).